Here is a 370-residue protein sequence, read N- to C-terminus: tRNA pseudouridine synthase D (370 aa).

Aspartate 77 acts as the Nucleophile in catalysis. Residues 152–297 (GVPNYFGEQR…LEQERRPLLL (146 aa)) enclose the TRUD domain.

Belongs to the pseudouridine synthase TruD family.

It carries out the reaction uridine(13) in tRNA = pseudouridine(13) in tRNA. Responsible for synthesis of pseudouridine from uracil-13 in transfer RNAs. The polypeptide is tRNA pseudouridine synthase D (Shewanella oneidensis (strain ATCC 700550 / JCM 31522 / CIP 106686 / LMG 19005 / NCIMB 14063 / MR-1)).